Reading from the N-terminus, the 334-residue chain is WD repeat-containing protein 54 (334 aa).

WD repeat units follow at residues 162–206 (GHQM…TLLT), 208–247 (IPGF…LHVQ), and 250–289 (AHAR…ESGY).

In terms of assembly, homodimer and homotrimer; forms tight forms of dimers and trimers. Interacts with IZUMO1 and IZUMO1R/JUNO. In terms of processing, cross-linked to tightly form both dimers and trimers by TGM2. Cross-linking enhances the activation of EGF receptor-mediated signaling pathway. Cross-linking is inhibited by EGF. Post-translationally, ubiquitinated. EGF increases ubiquitination. In terms of tissue distribution, expressed in epithelial cells (at protein level). Isoform 3 expression is highly increased in colorectal cancer cells.

Its subcellular location is the vesicle. It is found in the cytoplasm. The protein localises to the cell membrane. Its function is as follows. Plays a role in the adhesion and fusion of the sperm-oocyte membrane through its interactions with IZUMO1 and IZUMO1R/JUNO. When cross-linked to form dimers and trimers, it has a regulatory effect on ERK signaling pathway activity in response to EGF stimulation. Colocalizes with the EGF receptor in WDR54-specific vesicle where it sustains the internalization and controls the degradation of the EGF receptor after EGF stimulation. In Homo sapiens (Human), this protein is WD repeat-containing protein 54.